We begin with the raw amino-acid sequence, 570 residues long: Periplasmic trehalase (570 aa).

The signal sequence occupies residues 1-34; the sequence is MITPALRHSGTLSFAIKLTVASTLLTFASLSAHA. Substrate contacts are provided by residues R157, 164–165, N201, 210–212, 282–284, and G315; these read WD, RSQ, and RPE. Active-site proton donor/acceptor residues include D317 and E501. E516 lines the substrate pocket. A disordered region spans residues 542-570; it reads KPCDSVPATRPAAPGASQPAPQKQVETTP. Residues 552–570 show a composition bias toward low complexity; that stretch reads PAAPGASQPAPQKQVETTP.

This sequence belongs to the glycosyl hydrolase 37 family. Monomer.

It localises to the periplasm. It catalyses the reaction alpha,alpha-trehalose + H2O = alpha-D-glucose + beta-D-glucose. Functionally, provides the cells with the ability to utilize trehalose at high osmolarity by splitting it into glucose molecules that can subsequently be taken up by the phosphotransferase-mediated uptake system. The protein is Periplasmic trehalase of Citrobacter koseri (strain ATCC BAA-895 / CDC 4225-83 / SGSC4696).